A 435-amino-acid chain; its full sequence is Protein lin-54 (435 aa).

The interval Asp-73–Pro-136 is disordered. Residues Thr-102–Pro-120 show a composition bias toward polar residues. The 116-residue stretch at Gln-173–Thr-288 folds into the CRC domain. The interval Lys-175–Tyr-188 is DNA-binding. Cys-177, Cys-179, Cys-184, Cys-189, Cys-191, Cys-198, Cys-201, Cys-203, and Cys-206 together coordinate Zn(2+). The tract at residues Ile-235–Gln-250 is linker. 9 residues coordinate Zn(2+): Cys-253, Cys-255, Cys-260, Cys-265, Cys-267, Cys-274, Cys-278, Cys-280, and Cys-283. The DNA-binding stretch occupies residues Cys-253–Glu-266. Residues Leu-415–Ser-435 form a disordered region.

It belongs to the lin-54 family. In terms of assembly, component of the DRM complex, at least composed of lin-9, lin-35, lin-37, lin-52, lin-53, lin-54- dpl-1 and efl-1.

The protein resides in the nucleus. The protein localises to the chromosome. In terms of biological role, synthetic multivulva class B (synMuvB) protein. SynMuvB proteins are required to repress the induction of vulval development by Ras signaling and probably act by forming the multiprotein DRM complex that repress transcription. The chain is Protein lin-54 from Caenorhabditis elegans.